Here is a 270-residue protein sequence, read N- to C-terminus: Meiotic recombination 1 protein (270 aa).

The 35-residue stretch at 191–225 (EIKLNKTQITFLIGAKGTRIESLREKSGASIKIIP) folds into the KH domain.

Required for chromosome pairing and genetic recombination. MER1 may function to bring the axial elements of the synaptonemal complex corresponding to homologous chromosomes together by initiating recombination. MER1 might be responsible for regulating the MER2 gene and/or gene product. The sequence is that of Meiotic recombination 1 protein (MER1) from Saccharomyces cerevisiae (strain ATCC 204508 / S288c) (Baker's yeast).